A 61-amino-acid chain; its full sequence is Protein MATERNALLY EXPRESSED GENE 6 (61 aa).

An intrachain disulfide couples Cys-38 to Cys-60.

The protein belongs to the MEG family. Ubiquitous.

This is Protein MATERNALLY EXPRESSED GENE 6 (MEG6) from Zea mays (Maize).